A 289-amino-acid chain; its full sequence is NAD kinase (289 aa).

Catalysis depends on Asp-68, which acts as the Proton acceptor. NAD(+) contacts are provided by residues 68–69 (DG), Lys-73, 142–143 (ND), Arg-153, Asp-172, 183–188 (TAYSLS), and Gln-243.

The protein belongs to the NAD kinase family. Requires a divalent metal cation as cofactor.

Its subcellular location is the cytoplasm. It carries out the reaction NAD(+) + ATP = ADP + NADP(+) + H(+). Its function is as follows. Involved in the regulation of the intracellular balance of NAD and NADP, and is a key enzyme in the biosynthesis of NADP. Catalyzes specifically the phosphorylation on 2'-hydroxyl of the adenosine moiety of NAD to yield NADP. The chain is NAD kinase from Acetivibrio thermocellus (strain ATCC 27405 / DSM 1237 / JCM 9322 / NBRC 103400 / NCIMB 10682 / NRRL B-4536 / VPI 7372) (Clostridium thermocellum).